We begin with the raw amino-acid sequence, 326 residues long: MLAWALLSAVLWSLAGVGSARSSLFSNEGFVYGTVGHPVKIYVKLHQTSPVLVCMDIDRASKETVDPIYLWIGPNENTLTGSSQINITNIGELVLKDFMESLSGHYSCTLSYKIVKAETQEETSLKKKYDFLVFAYREPDYSYRMAVRFTTKSCVGRYNDLLFRLLKKILDNLISDLLCHVIEPSYKCHSVKIPERDFVYELFVAFQVNPFAPGWKSMCNSSMDCEDVTNHNILKARDRIEEFFRSQAYILHHHFNITVPAMHFVDHSFQVTRIDNCRPGFGKNEGLHSNCASCCVVCSPGTFSPDMDVTCQTCVSAHVYGAKACP.

Positions 1–20 (MLAWALLSAVLWSLAGVGSA) are cleaved as a signal peptide. N-linked (GlcNAc...) asparagine glycans are attached at residues asparagine 86, asparagine 220, and asparagine 256.

The protein belongs to the zona pellucida-binding protein Sp38 family. In terms of processing, N-glycosylated.

The protein localises to the secreted. It is found in the cytoplasmic vesicle. The protein resides in the secretory vesicle. Its subcellular location is the acrosome. Is implicated in sperm-oocyte interaction during fertilization. The protein is Zona pellucida-binding protein 2 (Zpbp2) of Rattus norvegicus (Rat).